The following is a 284-amino-acid chain: Nucleotide-binding protein NMB0738 (284 aa).

Position 8 to 15 (G8 to S15) interacts with ATP. D58–S61 is a GTP binding site.

The protein belongs to the RapZ-like family.

Its function is as follows. Displays ATPase and GTPase activities. The protein is Nucleotide-binding protein NMB0738 of Neisseria meningitidis serogroup B (strain ATCC BAA-335 / MC58).